The chain runs to 274 residues: Large ribosomal subunit protein uL2 (274 aa).

Residues 224-254 form a disordered region; it reads AMNPVDHPHGGGEGRTGEGQAPVSPWNTLTK. The segment covering 229-239 has biased composition (basic and acidic residues); sequence DHPHGGGEGRT.

This sequence belongs to the universal ribosomal protein uL2 family. As to quaternary structure, part of the 50S ribosomal subunit. Forms a bridge to the 30S subunit in the 70S ribosome.

Functionally, one of the primary rRNA binding proteins. Required for association of the 30S and 50S subunits to form the 70S ribosome, for tRNA binding and peptide bond formation. It has been suggested to have peptidyltransferase activity; this is somewhat controversial. Makes several contacts with the 16S rRNA in the 70S ribosome. The polypeptide is Large ribosomal subunit protein uL2 (Leptothrix cholodnii (strain ATCC 51168 / LMG 8142 / SP-6) (Leptothrix discophora (strain SP-6))).